The chain runs to 149 residues: UPF0178 protein VF_0601 (149 aa).

It belongs to the UPF0178 family.

This chain is UPF0178 protein VF_0601, found in Aliivibrio fischeri (strain ATCC 700601 / ES114) (Vibrio fischeri).